The sequence spans 250 residues: 5'-nucleotidase SurE (250 aa).

Positions 8, 9, 40, and 94 each coordinate a divalent metal cation.

It belongs to the SurE nucleotidase family. It depends on a divalent metal cation as a cofactor.

Its subcellular location is the cytoplasm. The enzyme catalyses a ribonucleoside 5'-phosphate + H2O = a ribonucleoside + phosphate. Nucleotidase that shows phosphatase activity on nucleoside 5'-monophosphates. The protein is 5'-nucleotidase SurE of Wolbachia pipientis wMel.